The sequence spans 285 residues: Homeobox protein Hox-A13b (285 aa).

Residues 219 to 278 (GRKKRVPYTKVQLKELEREYAANKFITKDKRRRISAQTNLTERQVTIWFQNRRVKEKKVV) constitute a DNA-binding region (homeobox).

Belongs to the Abd-B homeobox family.

It is found in the nucleus. Functionally, sequence-specific transcription factor which is part of a developmental regulatory system that provides cells with specific positional identities on the anterior-posterior axis. The protein is Homeobox protein Hox-A13b (hoxa13b) of Takifugu rubripes (Japanese pufferfish).